A 291-amino-acid polypeptide reads, in one-letter code: MAKVAFIGLGVMGFPMAGHLVKQGHDVTVYNRTGAKATQWVEQYGGKKADTPKDAAQGQDIVFTCVGNDDDLRQVVLGEHGIVHGMHAGAILVDHTTASADVAREIAAYIEPLNIAFLDAPVSGGQAGAENGALTVMMGGDQAHFDTVKPVISAYSRCAELLGPVGAGQLTKMVNQICIAGVVQGLAEGLHFAKSAGLDGLKVIEVISKGAAQSWQMENRYKTMWQGQYDFGFAIDWMRKDLGIALDEARRNGSHLPVAALVDQFYSEVQAMKGNRWDTSSLLARLEKSRS.

Residues 5–19 and T97 contribute to the NAD(+) site; that span reads AFIGLGVMGFPMAGH. The active site involves K172. K240 serves as a coordination point for NAD(+).

The protein belongs to the HIBADH-related family.

This is an uncharacterized protein from Shewanella frigidimarina (strain NCIMB 400).